Reading from the N-terminus, the 288-residue chain is Elongation factor Ts (288 aa).

Positions 79–82 (TDFV) are involved in Mg(2+) ion dislocation from EF-Tu.

The protein belongs to the EF-Ts family.

Its subcellular location is the cytoplasm. Functionally, associates with the EF-Tu.GDP complex and induces the exchange of GDP to GTP. It remains bound to the aminoacyl-tRNA.EF-Tu.GTP complex up to the GTP hydrolysis stage on the ribosome. The chain is Elongation factor Ts from Ehrlichia ruminantium (strain Gardel).